A 168-amino-acid chain; its full sequence is Large ribosomal subunit protein uL10 (168 aa).

The protein belongs to the universal ribosomal protein uL10 family. In terms of assembly, part of the ribosomal stalk of the 50S ribosomal subunit. The N-terminus interacts with L11 and the large rRNA to form the base of the stalk. The C-terminus forms an elongated spine to which L12 dimers bind in a sequential fashion forming a multimeric L10(L12)X complex.

Functionally, forms part of the ribosomal stalk, playing a central role in the interaction of the ribosome with GTP-bound translation factors. The polypeptide is Large ribosomal subunit protein uL10 (Photorhabdus laumondii subsp. laumondii (strain DSM 15139 / CIP 105565 / TT01) (Photorhabdus luminescens subsp. laumondii)).